The following is a 397-amino-acid chain: Argininosuccinate synthase (397 aa).

9–17 (AYSGGLDTS) lines the ATP pocket. Tyr-87 is an L-citrulline binding site. Gly-117 is an ATP binding site. L-aspartate-binding residues include Thr-119, Asn-123, and Asp-124. An L-citrulline-binding site is contributed by Asn-123. Residues Arg-127, Ser-175, Ser-184, Glu-257, and Tyr-269 each coordinate L-citrulline.

Belongs to the argininosuccinate synthase family. Type 1 subfamily. As to quaternary structure, homotetramer.

It is found in the cytoplasm. The catalysed reaction is L-citrulline + L-aspartate + ATP = 2-(N(omega)-L-arginino)succinate + AMP + diphosphate + H(+). Its pathway is amino-acid biosynthesis; L-arginine biosynthesis; L-arginine from L-ornithine and carbamoyl phosphate: step 2/3. This is Argininosuccinate synthase from Dictyoglomus thermophilum (strain ATCC 35947 / DSM 3960 / H-6-12).